The sequence spans 435 residues: Enolase (435 aa).

Residue Gln-163 participates in (2R)-2-phosphoglycerate binding. The Proton donor role is filled by Glu-205. Residues Asp-243, Glu-292, and Asp-319 each contribute to the Mg(2+) site. Residues Lys-344, Arg-373, Ser-374, and Lys-395 each coordinate (2R)-2-phosphoglycerate. The active-site Proton acceptor is Lys-344.

The protein belongs to the enolase family. Requires Mg(2+) as cofactor.

It localises to the cytoplasm. Its subcellular location is the secreted. It is found in the cell surface. It carries out the reaction (2R)-2-phosphoglycerate = phosphoenolpyruvate + H2O. It functions in the pathway carbohydrate degradation; glycolysis; pyruvate from D-glyceraldehyde 3-phosphate: step 4/5. Catalyzes the reversible conversion of 2-phosphoglycerate (2-PG) into phosphoenolpyruvate (PEP). It is essential for the degradation of carbohydrates via glycolysis. The protein is Enolase of Streptococcus uberis (strain ATCC BAA-854 / 0140J).